Reading from the N-terminus, the 445-residue chain is UDP-N-acetylmuramoylalanine--D-glutamate ligase (445 aa).

Position 117 to 123 (117 to 123) interacts with ATP; that stretch reads GSNGKTT.

This sequence belongs to the MurCDEF family.

Its subcellular location is the cytoplasm. The enzyme catalyses UDP-N-acetyl-alpha-D-muramoyl-L-alanine + D-glutamate + ATP = UDP-N-acetyl-alpha-D-muramoyl-L-alanyl-D-glutamate + ADP + phosphate + H(+). It participates in cell wall biogenesis; peptidoglycan biosynthesis. In terms of biological role, cell wall formation. Catalyzes the addition of glutamate to the nucleotide precursor UDP-N-acetylmuramoyl-L-alanine (UMA). In Neisseria meningitidis serogroup B (strain ATCC BAA-335 / MC58), this protein is UDP-N-acetylmuramoylalanine--D-glutamate ligase.